The following is an 860-amino-acid chain: Translation initiation factor IF-2 (860 aa).

Residues 1–11 (MSDTKSGDDKT) are compositionally biased toward basic and acidic residues. The disordered stretch occupies residues 1–265 (MSDTKSGDDK…MRRRQEKFKR (265 aa)). Residues 79–88 (AAPVVQEAPK) show a composition bias toward low complexity. The span at 110–183 (SRSEMEARRR…RRRAEEEARR (74 aa)) shows a compositional bias: basic and acidic residues. A tr-type G domain is found at 358–525 (PRPPVVTIMG…AILLQAEILD (168 aa)). The G1 stretch occupies residues 367–374 (GHVDHGKT). 367 to 374 (GHVDHGKT) is a GTP binding site. The interval 392–396 (GITQH) is G2. A G3 region spans residues 413-416 (DTPG). GTP is bound by residues 413–417 (DTPGH) and 467–470 (NKID). The G4 stretch occupies residues 467–470 (NKID). Residues 503–505 (SAT) form a G5 region.

This sequence belongs to the TRAFAC class translation factor GTPase superfamily. Classic translation factor GTPase family. IF-2 subfamily.

It is found in the cytoplasm. In terms of biological role, one of the essential components for the initiation of protein synthesis. Protects formylmethionyl-tRNA from spontaneous hydrolysis and promotes its binding to the 30S ribosomal subunits. Also involved in the hydrolysis of GTP during the formation of the 70S ribosomal complex. The chain is Translation initiation factor IF-2 from Mesorhizobium japonicum (strain LMG 29417 / CECT 9101 / MAFF 303099) (Mesorhizobium loti (strain MAFF 303099)).